A 336-amino-acid chain; its full sequence is Large ribosomal subunit protein mL39 (336 aa).

Positions 60–126 (EKIEVKHVGK…TKSCEIKFLT (67 aa)) constitute a TGS domain. K123 is subject to N6-acetyllysine.

It belongs to the mitochondrion-specific ribosomal protein mL39 family. As to quaternary structure, component of the mitochondrial ribosome large subunit (39S) which comprises a 16S rRNA and about 50 distinct proteins.

It is found in the mitochondrion. The sequence is that of Large ribosomal subunit protein mL39 (Mrpl39) from Mus musculus (Mouse).